Consider the following 417-residue polypeptide: Queuine tRNA-ribosyltransferase accessory subunit 2 (417 aa).

4 residues coordinate Zn(2+): Cys-324, Cys-326, Cys-329, and His-355.

The protein belongs to the queuine tRNA-ribosyltransferase family. QTRT2 subfamily. Heterodimer of a catalytic subunit and an accessory subunit. Zn(2+) serves as cofactor.

It is found in the cytoplasm. In terms of biological role, non-catalytic subunit of the queuine tRNA-ribosyltransferase (TGT) that catalyzes the base-exchange of a guanine (G) residue with queuine (Q) at position 34 (anticodon wobble position) in tRNAs with GU(N) anticodons (tRNA-Asp, -Asn, -His and -Tyr), resulting in the hypermodified nucleoside queuosine (7-(((4,5-cis-dihydroxy-2-cyclopenten-1-yl)amino)methyl)-7-deazaguanosine). The chain is Queuine tRNA-ribosyltransferase accessory subunit 2 from Drosophila pseudoobscura pseudoobscura (Fruit fly).